The sequence spans 369 residues: MLFPKRLIVWGVLLILSLSQFVLYLPATTCTNSKGLRLCAPQFTITVIGGSSTANEFIASVREFLRLISYLTIDMGWSNEFTDPSVYEDENLVDTFQPDKVFELNYFGFCKRSNKSKVYCTSNENYGMDVLEVLVRDVGIQLGNISTTRSNETKKFGDSLVLTYRLALTSIRDFLKHDKHTGNALSKALIGSPDPNVKGASPTKNYLKGVNLAFILMMFNGMVFYFAVLEIIVGFLSICVVSAFGGALSVGKRHRLFPILLKSSSSILVVIATLTILCNIVYLIALKTLEPEEVTDVGSDNAAVHTTGWELLKVNVGSGFIMGLARYAIQWVLLVLAFLAANHYKAKPKKSDKYTEDTSNSPSPDLMEK.

Over 1–6 (MLFPKR) the chain is Cytoplasmic. Residues 7 to 27 (LIVWGVLLILSLSQFVLYLPA) form a helical membrane-spanning segment. Over 28–220 (TTCTNSKGLR…NLAFILMMFN (193 aa)) the chain is Lumenal. The chain crosses the membrane as a helical span at residues 221-241 (GMVFYFAVLEIIVGFLSICVV). Topologically, residues 242–265 (SAFGGALSVGKRHRLFPILLKSSS) are cytoplasmic. The chain crosses the membrane as a helical span at residues 266–286 (SILVVIATLTILCNIVYLIAL). Residues 287–319 (KTLEPEEVTDVGSDNAAVHTTGWELLKVNVGSG) are Lumenal-facing. Residues 320 to 340 (FIMGLARYAIQWVLLVLAFLA) form a helical membrane-spanning segment. At 341-369 (ANHYKAKPKKSDKYTEDTSNSPSPDLMEK) the chain is on the cytoplasmic side. Positions 348 to 369 (PKKSDKYTEDTSNSPSPDLMEK) are disordered.

The protein belongs to the SMA2 family.

The protein resides in the prospore membrane. It localises to the endoplasmic reticulum. Functionally, involved in spore and ascus formation. Required for the efficient assembly of the precursors of the prospore membrane to a continuous prospore membrane. In Saccharomyces cerevisiae (strain YJM789) (Baker's yeast), this protein is Spore membrane assembly protein 2 (SMA2).